Here is a 163-residue protein sequence, read N- to C-terminus: Globin CTT-Z (163 aa).

An N-terminal signal peptide occupies residues Met1–Ala16. A Globin domain is found at Pro18–Thr162. Heme b contacts are provided by His76 and His111.

The protein belongs to the globin family.

This is Globin CTT-Z (CTT-Z) from Chironomus thummi piger (Midge).